Consider the following 337-residue polypeptide: Viral cathepsin (337 aa).

The first 16 residues, Met1–Thr16, serve as a signal peptide directing secretion. Positions Arg17–Arg126 are cleaved as a propeptide — activation peptide. Cystine bridges form between Cys147–Cys188, Cys181–Cys221, and Cys276–Cys324. Cys150 is an active-site residue. Active-site residues include His283 and Asn303.

This sequence belongs to the peptidase C1 family. In terms of processing, synthesized as an inactive proenzyme and activated by proteolytic removal of the inhibitory propeptide.

The enzyme catalyses Endopeptidase of broad specificity, hydrolyzing substrates of both cathepsin L and cathepsin B.. Cysteine protease that plays an essential role in host liquefaction to facilitate horizontal transmission of the virus. May participate in the degradation of foreign protein expressed by the baculovirus system. This is Viral cathepsin (VCATH) from Lepidoptera (butterflies and moths).